A 379-amino-acid polypeptide reads, in one-letter code: Putative 2-hydroxyacid dehydrogenase YGL185C (379 aa).

Residues 207–208 (SI), 291–293 (LGR), and Asp317 each bind NAD(+). The active site involves Arg293. Residue Glu322 is part of the active site. The active-site Proton donor is His341. 341–344 (HLGS) contributes to the NAD(+) binding site.

The protein belongs to the D-isomer specific 2-hydroxyacid dehydrogenase family.

The chain is Putative 2-hydroxyacid dehydrogenase YGL185C from Saccharomyces cerevisiae (strain ATCC 204508 / S288c) (Baker's yeast).